Reading from the N-terminus, the 119-residue chain is MKKKHRIKKNDEFQTVFQKGKSNANRQFVVYQLDKEEQPNFRIGLSVSKKIGNAVVRNRIKRMIRQSITELKDEIDSGKDFVIIARKPCAEMTYEELKKSLIHVFKRSGMKRIKSSVRK.

This sequence belongs to the RnpA family. In terms of assembly, consists of a catalytic RNA component (M1 or rnpB) and a protein subunit.

The enzyme catalyses Endonucleolytic cleavage of RNA, removing 5'-extranucleotides from tRNA precursor.. RNaseP catalyzes the removal of the 5'-leader sequence from pre-tRNA to produce the mature 5'-terminus. It can also cleave other RNA substrates such as 4.5S RNA. The protein component plays an auxiliary but essential role in vivo by binding to the 5'-leader sequence and broadening the substrate specificity of the ribozyme. The chain is Ribonuclease P protein component from Bacillus cereus (strain ZK / E33L).